Here is an 87-residue protein sequence, read N- to C-terminus: Translation initiation factor IF-1 2 (87 aa).

In terms of domain architecture, S1-like spans 1–72; sequence MAKEELLELD…TKGRINFRHK (72 aa).

This sequence belongs to the IF-1 family. As to quaternary structure, component of the 30S ribosomal translation pre-initiation complex which assembles on the 30S ribosome in the order IF-2 and IF-3, IF-1 and N-formylmethionyl-tRNA(fMet); mRNA recruitment can occur at any time during PIC assembly.

It is found in the cytoplasm. One of the essential components for the initiation of protein synthesis. Stabilizes the binding of IF-2 and IF-3 on the 30S subunit to which N-formylmethionyl-tRNA(fMet) subsequently binds. Helps modulate mRNA selection, yielding the 30S pre-initiation complex (PIC). Upon addition of the 50S ribosomal subunit IF-1, IF-2 and IF-3 are released leaving the mature 70S translation initiation complex. This is Translation initiation factor IF-1 2 from Burkholderia vietnamiensis (strain G4 / LMG 22486) (Burkholderia cepacia (strain R1808)).